The sequence spans 733 residues: Two pore calcium channel protein 1 (733 aa).

Met-1 carries the post-translational modification N-acetylmethionine. The Cytoplasmic portion of the chain corresponds to 1 to 71 (MEDPLIGRDS…RYYFIFTRLD (71 aa)). The chain crosses the membrane as a helical span at residues 72-92 (LIWSLNYFALLFLNFFEQPLW). At 93–120 (CEKNPKPSCKDRDYYYLGELPYLTNAES) the chain is on the vacuolar side. The helical transmembrane segment at 121–141 (IIYEVITLAILLVHTFFPISY) threads the bilayer. Topologically, residues 142–158 (EGSRIFWTSRLNLVKVA) are cytoplasmic. A helical membrane pass occupies residues 159–179 (CVVILFVDVLVDFLYLSPLAF). A topological domain (vacuolar) is located at residue Asp-180. A helical; Voltage-sensor transmembrane segment spans residues 181–199 (FLPFRIAPYVRVIIFILSI). Residues 200 to 218 (RELRDTLVLLSGMLGTYLN) are Cytoplasmic-facing. Residues 219-239 (ILALWMLFLLFASWIAFVMFE) traverse the membrane as a helical segment. Over 240-245 (DTQQGL) the chain is Vacuolar. The segment at residues 246–260 (TVFTSYGATLYQMFI) is an intramembrane region (pore-forming). Residues 261-282 (LFTTSNNPDVWIPAYKSSRWSS) are Vacuolar-facing. A helical transmembrane segment spans residues 283 to 303 (VFFVLYVLIGVYFVTNLILAV). Topologically, residues 304–428 (VYDSFKEQLA…LSQQLRAFVR (125 aa)) are cytoplasmic. 2 consecutive EF-hand domains span residues 322-357 (MKRR…LTNY) and 363-398 (ISKE…IALR). A helical transmembrane segment spans residues 429–449 (SPNFGYAISFILIINFIAVVV). Topologically, residues 450 to 465 (ETTLDIEESSAQKPWQ) are vacuolar. The helical transmembrane segment at 466–486 (VAEFVFGWIYVLEMALKIYTY) threads the bilayer. At 487–498 (GFENYWREGANR) the chain is on the cytoplasmic side. The helical transmembrane segment at 499–519 (FDFLVTWVIVIGETATFITPD) threads the bilayer. Residues 520–528 (ENTFFSNGE) are Vacuolar-facing. The helical; Voltage-sensor transmembrane segment at 529-546 (WIRYLLLARMLRLIRLLM) threads the bilayer. The Cytoplasmic segment spans residues 547–557 (NVQRYRAFIAT). Residues 558-578 (FITLIPSLMPYLGTIFCVLCI) form a helical membrane-spanning segment. Over 579 to 615 (YCSIGVQVFGGLVNAGNKKLFETELAEDDYLLFNFND) the chain is Vacuolar. An intramembrane region (pore-forming) is located at residues 616–630 (YPNGMVTLFNLLVMG). The Vacuolar segment spans residues 631–651 (NWQVWMESYKDLTGTWWSITY). A helical membrane pass occupies residues 652 to 672 (FVSFYVITILLLLNLVVAFVL). Over 673 to 733 (EAFFTELDLE…SKPECSTSDT (61 aa)) the chain is Cytoplasmic. The span at 686–695 (KCQGQDSQEK) shows a compositional bias: basic and acidic residues. The tract at residues 686-711 (KCQGQDSQEKRNRRRSAGSKSRSQRV) is disordered.

It belongs to the calcium channel alpha-1 subunit (TC 1.A.1.11) family. Two pore calcium channel subfamily. Homodimer. In terms of tissue distribution, ubiquitously expressed.

It localises to the vacuole membrane. With respect to regulation, inhibited by Al(3+). Functionally, functions as a voltage-gated inward-rectifying Ca(2+) channel (VDCC) across the vacuole membrane. Is one of the essential components of the slow vacuolar (SV) channel. Acts as the major ROS-responsive Ca(2+) channel and is the possible target of Al-dependent inhibition. Involved in the regulation of germination and stomatal movement. The polypeptide is Two pore calcium channel protein 1 (TPC1) (Arabidopsis thaliana (Mouse-ear cress)).